The primary structure comprises 428 residues: MRDNSAKGITAGSESQQTTYDPTRTEAALTASTTFALRRYDLAGRALYDLDFSRLNPQTPTRDQTGQITFNPFGGFGLSGAAPQQWNEVKNKVPVEVAQDPSNPYRFAVLLVPRSVVYYEQLQRGLALPNQGSSSGSGQQNTTIGAYGLKVKNAEADTAKSNEKLQGDESKSSNGSSSTSTTTQRGGSSGDTKVKALQVAVKKKSGSQGNSGEQGTEQVELESNDLANAPIKRGEESGQSVQLKAADFGTTPSSSGSGGNSNPGSPTPWRPWLATEQIHKDLPKWSASILILYDAPYARNRTAIDRVDHLDPKVMTANYPPSWRTPKWNHHGLWDWKARDVLLQTTGFFNSRRHPEWFDQGQAVADNTQTGFDTDDTDNKKTRLSKGSWLRQAGPDRPPVWSVLRQHWQPHLVRASAFGVWDLFVLIN.

Disordered stretches follow at residues 1–25, 157–219, and 247–271; these read MRDN…PTRT, DTAK…TEQV, and DFGT…PWRP. Residues 12–22 show a composition bias toward polar residues; it reads GSESQQTTYDP. The segment covering 157-171 has biased composition (basic and acidic residues); that stretch reads DTAKSNEKLQGDESK. The segment covering 172 to 186 has biased composition (low complexity); that stretch reads SSNGSSSTSTTTQRG. A compositionally biased stretch (polar residues) spans 206 to 217; the sequence is GSQGNSGEQGTE.

The protein belongs to the adhesin P1 family.

This is an uncharacterized protein from Mycoplasma pneumoniae (strain ATCC 29342 / M129 / Subtype 1) (Mycoplasmoides pneumoniae).